A 682-amino-acid chain; its full sequence is Kinesin-like protein KIF2A (682 aa).

A globular region spans residues 1–192 (MVTSLNEDSE…LDYRPLTTSD (192 aa)). The disordered stretch occupies residues 39–129 (LAPDEEIDPG…GKKDFGLASR (91 aa)). Residues 99–115 (IEQSASRQQNGSVSDIS) show a composition bias toward polar residues. The Kinesin motor domain maps to 198-528 (RICVCVRKRP…LRYANRVKEL (331 aa)). 288 to 295 (GQTGSGKT) is a binding site for ATP. Residues 638–673 (QLEAILEKKIDILTELRDKVKSFRAALQEEEHASKQ) adopt a coiled-coil conformation.

It belongs to the TRAFAC class myosin-kinesin ATPase superfamily. Kinesin family. MCAK/KIF2 subfamily. In terms of assembly, interacts with aurka and plk1. Post-translationally, phosphorylation by plk1 promotes location at spindle microtubules and spindle poles, and enhances its microtubule depolymerization activity. Phosphorylation by AURKA interferes with location at spindle microtubules and spindle poles, and inhibits its microtubule depolymerization activity.

It is found in the cytoplasm. The protein resides in the cytoskeleton. Its subcellular location is the microtubule organizing center. It localises to the centrosome. The protein localises to the spindle pole. It is found in the spindle. Functionally, plus end-directed microtubule-dependent motor. May regulate microtubule dynamics during axonal growth. Required for normal progression through mitosis. Required for normal congress of chromosomes at the metaphase plate. Required for normal spindle dynamics during mitosis. Promotes spindle turnover. Implicated in formation of bipolar mitotic spindles Has microtubule depolymerization activity. The sequence is that of Kinesin-like protein KIF2A (kif2a) from Xenopus laevis (African clawed frog).